A 322-amino-acid chain; its full sequence is Phosphatidylserine decarboxylase proenzyme (322 aa).

Catalysis depends on charge relay system; for autoendoproteolytic cleavage activity residues Asp90, His147, and Ser254. Ser254 acts as the Schiff-base intermediate with substrate; via pyruvic acid; for decarboxylase activity in catalysis. Pyruvic acid (Ser); by autocatalysis is present on Ser254. The tract at residues 297 to 322 is disordered; sequence PAPLPAEEIKAEHDASPLVDNKKDDT. The span at 303–322 shows a compositional bias: basic and acidic residues; it reads EEIKAEHDASPLVDNKKDDT.

Belongs to the phosphatidylserine decarboxylase family. PSD-B subfamily. Prokaryotic type I sub-subfamily. In terms of assembly, heterodimer of a large membrane-associated beta subunit and a small pyruvoyl-containing alpha subunit. Pyruvate serves as cofactor. Is synthesized initially as an inactive proenzyme. Formation of the active enzyme involves a self-maturation process in which the active site pyruvoyl group is generated from an internal serine residue via an autocatalytic post-translational modification. Two non-identical subunits are generated from the proenzyme in this reaction, and the pyruvate is formed at the N-terminus of the alpha chain, which is derived from the carboxyl end of the proenzyme. The autoendoproteolytic cleavage occurs by a canonical serine protease mechanism, in which the side chain hydroxyl group of the serine supplies its oxygen atom to form the C-terminus of the beta chain, while the remainder of the serine residue undergoes an oxidative deamination to produce ammonia and the pyruvoyl prosthetic group on the alpha chain. During this reaction, the Ser that is part of the protease active site of the proenzyme becomes the pyruvoyl prosthetic group, which constitutes an essential element of the active site of the mature decarboxylase.

The protein resides in the cell membrane. The enzyme catalyses a 1,2-diacyl-sn-glycero-3-phospho-L-serine + H(+) = a 1,2-diacyl-sn-glycero-3-phosphoethanolamine + CO2. Its pathway is phospholipid metabolism; phosphatidylethanolamine biosynthesis; phosphatidylethanolamine from CDP-diacylglycerol: step 2/2. In terms of biological role, catalyzes the formation of phosphatidylethanolamine (PtdEtn) from phosphatidylserine (PtdSer). In Salmonella typhi, this protein is Phosphatidylserine decarboxylase proenzyme.